The chain runs to 121 residues: Large ribosomal subunit protein bL12 (121 aa).

It belongs to the bacterial ribosomal protein bL12 family. In terms of assembly, homodimer. Part of the ribosomal stalk of the 50S ribosomal subunit. Forms a multimeric L10(L12)X complex, where L10 forms an elongated spine to which 2 to 4 L12 dimers bind in a sequential fashion. Binds GTP-bound translation factors.

Functionally, forms part of the ribosomal stalk which helps the ribosome interact with GTP-bound translation factors. Is thus essential for accurate translation. The chain is Large ribosomal subunit protein bL12 from Ureaplasma urealyticum serovar 10 (strain ATCC 33699 / Western).